A 375-amino-acid polypeptide reads, in one-letter code: 2-isopropylmalate synthase (375 aa).

Positions glycine 1 to tyrosine 124 constitute a Pyruvate carboxyltransferase domain. Positions 59, 61, and 95 each coordinate Mn(2+). A regulatory domain region spans residues glutamine 250–lysine 375.

The protein belongs to the alpha-IPM synthase/homocitrate synthase family. LeuA type 1 subfamily. As to quaternary structure, homodimer.

Its subcellular location is the cytoplasm. It carries out the reaction 3-methyl-2-oxobutanoate + acetyl-CoA + H2O = (2S)-2-isopropylmalate + CoA + H(+). It functions in the pathway amino-acid biosynthesis; L-leucine biosynthesis; L-leucine from 3-methyl-2-oxobutanoate: step 1/4. Catalyzes the condensation of the acetyl group of acetyl-CoA with 3-methyl-2-oxobutanoate (2-ketoisovalerate) to form 3-carboxy-3-hydroxy-4-methylpentanoate (2-isopropylmalate). This chain is 2-isopropylmalate synthase, found in Buchnera aphidicola subsp. Thelaxes suberi.